The chain runs to 263 residues: Troponin T, fast skeletal muscle isoforms (263 aa).

Residues Met-1–Glu-26 are compositionally biased toward acidic residues. Disordered regions lie at residues Met-1–Ile-66, Arg-107–Glu-188, and Asp-243–Lys-263. Ser-2 carries the N-acetylserine modification. Basic and acidic residues-rich tracts occupy residues Pro-56–Ile-66, Arg-107–Lys-149, and Thr-177–Glu-188. Basic residues predominate over residues Lys-247–Lys-263.

The protein belongs to the troponin T family.

In terms of biological role, troponin T is the tropomyosin-binding subunit of troponin, the thin filament regulatory complex which confers calcium-sensitivity to striated muscle actomyosin ATPase activity. The protein is Troponin T, fast skeletal muscle isoforms (TNNT3) of Gallus gallus (Chicken).